Reading from the N-terminus, the 26-residue chain is Somatostatin-1 (26 aa).

Cysteine 15 and cysteine 26 are disulfide-bonded.

The protein belongs to the somatostatin family.

Its subcellular location is the secreted. In terms of biological role, somatostatin inhibits the release of somatotropin. The polypeptide is Somatostatin-1 (sst1) (Amia calva (Bowfin)).